The primary structure comprises 949 residues: Lon protease homolog, mitochondrial (949 aa).

Residues 1–65 (MAASTGYVRL…VLPGGVQWRG (65 aa)) constitute a mitochondrion transit peptide. 2 disordered regions span residues 68-94 (DSGNRGGSDETSEGGAEDGATASTGEG) and 213-240 (EGLEPEAEKQKSRRKLKRGKKEVEDELG). Residues 112-359 (LPLIAITRNP…KALSLLKKEF (248 aa)) enclose the Lon N-terminal domain. The span at 223-232 (KSRRKLKRGK) shows a compositional bias: basic residues. 512–519 (GPPGVGKT) lines the ATP pocket. Residues 748–938 (VTPPGVVMGL…RDIFPIAFPR (191 aa)) enclose the Lon proteolytic domain. Residues serine 844 and lysine 887 contribute to the active site.

The protein belongs to the peptidase S16 family. Homohexamer. Organized in a ring with a central cavity. The ATP-binding and proteolytic domains (AP-domain) form a hexameric chamber, while the N-terminal domain is arranged as a trimer of dimers. DNA and RNA binding is stimulated by substrate and inhibited by ATP binding. Interacts with TWNK and mitochondrial DNA polymerase subunit POLG. In terms of tissue distribution, detected in liver &gt; heart &gt; kidney &gt; testis.

Its subcellular location is the mitochondrion matrix. It carries out the reaction Hydrolysis of proteins in presence of ATP.. ATP-dependent serine protease that mediates the selective degradation of misfolded, unassembled or oxidatively damaged polypeptides as well as certain short-lived regulatory proteins in the mitochondrial matrix. Endogenous substrates include mitochondrial steroidogenic acute regulatory (StAR) protein, DELE1, helicase Twinkle (TWNK) and the large ribosomal subunit protein MRPL32/bL32m. MRPL32/bL32m is protected from degradation by LONP1 when it is bound to a nucleic acid (RNA), but TWNK is not. May also have a chaperone function in the assembly of inner membrane protein complexes. Participates in the regulation of mitochondrial gene expression and in the maintenance of the integrity of the mitochondrial genome. Binds to mitochondrial promoters and RNA in a single-stranded, site-specific, and strand-specific manner. May regulate mitochondrial DNA replication and/or gene expression using site-specific, single-stranded DNA binding to target the degradation of regulatory proteins binding to adjacent sites in mitochondrial promoters. This is Lon protease homolog, mitochondrial (Lonp1) from Mus musculus (Mouse).